A 276-amino-acid chain; its full sequence is NAD kinase (276 aa).

The active-site Proton acceptor is aspartate 66. NAD(+) is bound by residues 66–67 (DG), 139–140 (ND), aspartate 168, 179–184 (TAYNIS), and glutamine 234.

This sequence belongs to the NAD kinase family. It depends on a divalent metal cation as a cofactor.

The protein localises to the cytoplasm. The enzyme catalyses NAD(+) + ATP = ADP + NADP(+) + H(+). Its function is as follows. Involved in the regulation of the intracellular balance of NAD and NADP, and is a key enzyme in the biosynthesis of NADP. Catalyzes specifically the phosphorylation on 2'-hydroxyl of the adenosine moiety of NAD to yield NADP. This chain is NAD kinase, found in Campylobacter lari (strain RM2100 / D67 / ATCC BAA-1060).